A 903-amino-acid polypeptide reads, in one-letter code: Centrobin (903 aa).

Positions 1-10 (MATSADSPSS) are enriched in polar residues. The segment at 1–34 (MATSADSPSSPLGAEDLLSDSSEPPGLNQVSSEV) is disordered. S80 is subject to Phosphoserine. Disordered regions lie at residues 110-140 (LQTSRDTAYRDPLIPGAGSERREEDSFDSDS), 471-493 (LRQAASLREHHRKQLQDLSGQHQ), 568-597 (LSTTLPPPNPPAPPAGPSSPGPQEPEKEER), 669-704 (SALGAFHPDHRAERPFPEEDPGPDGEGLLKQGLPPA), 772-799 (RVPEPPSSHSQGSGPSSGSPERGGDGLT), and 837-903 (SGTD…GVWR). A coiled-coil region spans residues 196-560 (RRKHCERHIQ…ERLQAMLQAH (365 aa)). Positions 365–903 (QEHQLKEHYQ…SMRSRGGVWR (539 aa)) are required for centrosome localization. Pro residues predominate over residues 572–590 (LPPPNPPAPPAGPSSPGPQ). Residues 675–685 (HPDHRAERPFP) are compositionally biased toward basic and acidic residues. Residues 778-791 (SSHSQGSGPSSGSP) are compositionally biased toward low complexity. S790 carries the post-translational modification Phosphoserine. Residues 837–863 (SGTDGRGDNVPRRNTDSRLGEIPRKEI) are compositionally biased toward basic and acidic residues.

Interacts with LYST. As to expression, widely expressed (at protein level). Highly expressed in testis. Also expressed in spleen, thymus, prostate, small intestine, colon and peripheral blood leukocytes.

It is found in the cytoplasm. The protein localises to the cytoskeleton. The protein resides in the microtubule organizing center. It localises to the centrosome. Its subcellular location is the centriole. Its function is as follows. Required for centriole duplication. Inhibition of centriole duplication leading to defects in cytokinesis. The chain is Centrobin (CNTROB) from Homo sapiens (Human).